Consider the following 254-residue polypeptide: MAGSVLKIAGRRLSQHTGSGAPVLLRQMFEPKSCTYTYLLGDRESREAVLIDPVLETAQRDAQLVKELGLRLLYAVNTHCHADHITGSGLLRSLLPGCQSVISRLSGAQADWHIEDGDSIQFGRFALETRASPGHTPGCVTFVLNDHSMAFTGDALLIRGCGRTDFQQGCAETLYHSVHEKIFTLPGNCLIYPAHDYHGLTVSTVEEERTLNPRLTLSCEEFVKVMDKLNLPKPQQIDFAVPANMRCGIQTPPS.

Residues 1-7 constitute a mitochondrion transit peptide; the sequence is MAGSVLK. Ser14 and Ser19 each carry phosphoserine. An N6-acetyllysine; alternate modification is found at Lys32. Position 32 is an N6-succinyllysine; alternate (Lys32). The residue at position 66 (Lys66) is an N6-acetyllysine. Fe cation-binding residues include His79, His135, and Asp154.

This sequence belongs to the metallo-beta-lactamase superfamily. Glyoxalase II family. In terms of assembly, homodimer. Monomer. Interacts with TST. May interact with RELA. Fe(2+) serves as cofactor.

The protein localises to the cytoplasm. It is found in the nucleus. The protein resides in the mitochondrion matrix. It carries out the reaction S-sulfanylglutathione + O2 + H2O = sulfite + glutathione + 2 H(+). Glutathione increases enzyme activity. Functionally, sulfur dioxygenase that plays an essential role in hydrogen sulfide catabolism in the mitochondrial matrix. Hydrogen sulfide (H(2)S) is first oxidized by SQRDL, giving rise to cysteine persulfide residues. ETHE1 consumes molecular oxygen to catalyze the oxidation of the persulfide, once it has been transferred to a thiophilic acceptor, such as glutathione (R-SSH). Plays an important role in metabolic homeostasis in mitochondria by metabolizing hydrogen sulfide and preventing the accumulation of supraphysiological H(2)S levels that have toxic effects, due to the inhibition of cytochrome c oxidase. First described as a protein that can shuttle between the nucleus and the cytoplasm and suppress p53-induced apoptosis by sequestering the transcription factor RELA/NFKB3 in the cytoplasm and preventing its accumulation in the nucleus. This is Persulfide dioxygenase ETHE1, mitochondrial (ETHE1) from Bos taurus (Bovine).